Consider the following 368-residue polypeptide: tRNA-specific 2-thiouridylase MnmA (368 aa).

ATP-binding positions include 11–18 (GMSGGVDS) and M37. The segment at 97-99 (NPD) is interaction with target base in tRNA. The active-site Nucleophile is the C102. C102 and C199 are disulfide-bonded. G127 contacts ATP. The interval 149–151 (KDQ) is interaction with tRNA. C199 (cysteine persulfide intermediate) is an active-site residue. The segment at 311–312 (RY) is interaction with tRNA.

The protein belongs to the MnmA/TRMU family. In terms of assembly, interacts with TusE.

The protein resides in the cytoplasm. It catalyses the reaction S-sulfanyl-L-cysteinyl-[protein] + uridine(34) in tRNA + AH2 + ATP = 2-thiouridine(34) in tRNA + L-cysteinyl-[protein] + A + AMP + diphosphate + H(+). In terms of biological role, catalyzes the 2-thiolation of uridine at the wobble position (U34) of tRNA(Lys), tRNA(Glu) and tRNA(Gln), leading to the formation of s(2)U34, the first step of tRNA-mnm(5)s(2)U34 synthesis. Sulfur is provided by IscS, via a sulfur-relay system. Binds ATP and its substrate tRNAs. This chain is tRNA-specific 2-thiouridylase MnmA, found in Shigella boydii serotype 18 (strain CDC 3083-94 / BS512).